We begin with the raw amino-acid sequence, 387 residues long: Formate-dependent phosphoribosylglycinamide formyltransferase (387 aa).

N(1)-(5-phospho-beta-D-ribosyl)glycinamide is bound by residues 15-16 (EL) and Glu75. ATP-binding positions include Arg106, Lys147, 152–157 (SSGKGQ), 187–190 (EEFI), and Glu195. Positions 111-301 (DLASNELNIR…EFELHLRAVL (191 aa)) constitute an ATP-grasp domain. Positions 260 and 272 each coordinate Mg(2+). Residues Asp279, Lys349, and 356–357 (RR) contribute to the N(1)-(5-phospho-beta-D-ribosyl)glycinamide site.

Belongs to the PurK/PurT family. As to quaternary structure, homodimer.

The catalysed reaction is N(1)-(5-phospho-beta-D-ribosyl)glycinamide + formate + ATP = N(2)-formyl-N(1)-(5-phospho-beta-D-ribosyl)glycinamide + ADP + phosphate + H(+). The protein operates within purine metabolism; IMP biosynthesis via de novo pathway; N(2)-formyl-N(1)-(5-phospho-D-ribosyl)glycinamide from N(1)-(5-phospho-D-ribosyl)glycinamide (formate route): step 1/1. Involved in the de novo purine biosynthesis. Catalyzes the transfer of formate to 5-phospho-ribosyl-glycinamide (GAR), producing 5-phospho-ribosyl-N-formylglycinamide (FGAR). Formate is provided by PurU via hydrolysis of 10-formyl-tetrahydrofolate. The chain is Formate-dependent phosphoribosylglycinamide formyltransferase from Prochlorococcus marinus (strain NATL1A).